The primary structure comprises 283 residues: 4-diphosphocytidyl-2-C-methyl-D-erythritol kinase (283 aa).

Lysine 10 is a catalytic residue. An ATP-binding site is contributed by 95–105 (PVAAGLGGGSS). Aspartate 137 is a catalytic residue.

Belongs to the GHMP kinase family. IspE subfamily.

It catalyses the reaction 4-CDP-2-C-methyl-D-erythritol + ATP = 4-CDP-2-C-methyl-D-erythritol 2-phosphate + ADP + H(+). The protein operates within isoprenoid biosynthesis; isopentenyl diphosphate biosynthesis via DXP pathway; isopentenyl diphosphate from 1-deoxy-D-xylulose 5-phosphate: step 3/6. Its function is as follows. Catalyzes the phosphorylation of the position 2 hydroxy group of 4-diphosphocytidyl-2C-methyl-D-erythritol. The protein is 4-diphosphocytidyl-2-C-methyl-D-erythritol kinase of Limosilactobacillus fermentum (strain NBRC 3956 / LMG 18251) (Lactobacillus fermentum).